An 83-amino-acid chain; its full sequence is Alpha-elapitoxin-Ppr1 (83 aa).

A signal peptide spans 1-21; sequence MKTLLLTLVVVTIVCLDLGYT. Disulfide bonds link Cys24–Cys45, Cys38–Cys62, Cys64–Cys75, and Cys76–Cys81.

Belongs to the three-finger toxin family. Short-chain subfamily. Type I alpha-neurotoxin sub-subfamily. In terms of tissue distribution, expressed by the venom gland.

Its subcellular location is the secreted. In terms of biological role, bird-specific neurotoxin (tested on chicken) that acts as a pseudo-irreversible antagonist at the nicotinic acetylcholine receptor (nAChR) of the skeletal neuromuscular junction. Has no significant effect on the electrically-induced twitches of the rat isolated phrenic nerve-diaphragm preparation. This Pseudechis porphyriacus (Red-bellied black snake) protein is Alpha-elapitoxin-Ppr1.